Consider the following 716-residue polypeptide: Fatty acid oxidation complex subunit alpha (716 aa).

Residues 1-189 (MIYQSPTIQV…KVGAVDSVVA (189 aa)) are enoyl-CoA hydratase/isomerase. D296 contacts substrate. Residues 311-716 (KEVNNAAVLG…AANNGSYYQA (406 aa)) are 3-hydroxyacyl-CoA dehydrogenase. NAD(+) contacts are provided by residues M324, D343, 400–402 (VVE), K407, and S429. H450 (for 3-hydroxyacyl-CoA dehydrogenase activity) is an active-site residue. NAD(+) is bound at residue N453. 2 residues coordinate substrate: N500 and Y660.

It in the N-terminal section; belongs to the enoyl-CoA hydratase/isomerase family. In the C-terminal section; belongs to the 3-hydroxyacyl-CoA dehydrogenase family. As to quaternary structure, heterotetramer of two alpha chains (FadB) and two beta chains (FadA).

The enzyme catalyses a (3S)-3-hydroxyacyl-CoA + NAD(+) = a 3-oxoacyl-CoA + NADH + H(+). The catalysed reaction is a (3S)-3-hydroxyacyl-CoA = a (2E)-enoyl-CoA + H2O. It catalyses the reaction a 4-saturated-(3S)-3-hydroxyacyl-CoA = a (3E)-enoyl-CoA + H2O. It carries out the reaction (3S)-3-hydroxybutanoyl-CoA = (3R)-3-hydroxybutanoyl-CoA. The enzyme catalyses a (3Z)-enoyl-CoA = a 4-saturated (2E)-enoyl-CoA. The catalysed reaction is a (3E)-enoyl-CoA = a 4-saturated (2E)-enoyl-CoA. It functions in the pathway lipid metabolism; fatty acid beta-oxidation. In terms of biological role, involved in the aerobic and anaerobic degradation of long-chain fatty acids via beta-oxidation cycle. Catalyzes the formation of 3-oxoacyl-CoA from enoyl-CoA via L-3-hydroxyacyl-CoA. It can also use D-3-hydroxyacyl-CoA and cis-3-enoyl-CoA as substrate. This chain is Fatty acid oxidation complex subunit alpha, found in Shewanella baltica (strain OS185).